A 592-amino-acid chain; its full sequence is Arginine--tRNA ligase (592 aa).

Residues 131-141 (ANPTGPMHVGH) carry the 'HIGH' region motif.

This sequence belongs to the class-I aminoacyl-tRNA synthetase family. Monomer.

Its subcellular location is the cytoplasm. It catalyses the reaction tRNA(Arg) + L-arginine + ATP = L-arginyl-tRNA(Arg) + AMP + diphosphate. In Rhodospirillum rubrum (strain ATCC 11170 / ATH 1.1.1 / DSM 467 / LMG 4362 / NCIMB 8255 / S1), this protein is Arginine--tRNA ligase.